Consider the following 565-residue polypeptide: MQKTIMRRVAQGQGHEPVDLVIKNVRLFDLVTGDLIPTDIAICGDRIVGTYGEYEGVQAIDGAGRIAVPGFIDTHLHVESSLVTPFEFDRCVLPHGVTTAICDPHEMANVLGRAAFDYFLAAAERTIMDLRVNLSSCVPATSMETSGAVLNVDDLVAYRHHPKVIGLAEFMNIPGVLNGDPGCVDKLAAFADGHIDGHAPLMCGKALNGYLAAGISTDHEATAADEALEKVRKGMTVLIREGSVCKDLEALVPLLNVATSPFFAFCTDDRNPLEIAHEGHLDFLIRRAIELGVEPLAAYRAASLSAATAFGLRDRGQIAPGKRADIVLLDDLERCQVSDVISAGRLVNDALFNSREIVSPVGLESVKLPRPVTAQDMAVEGSGRDRPVMGVIPGQIITEFLRLDLPEDHGHVLPDPEQDVAKVCVVARHGHNDNIGRGFVRGFGLKEGALASSVGHDSHNICVVGTSDADMACAVNHLEKTGGGFVAVRNGQVLADLCLPVAGLMSDAPYEQVRDDLIILRKAAKTMGVVLEEPFLQLAFLPLPVIPHLKITDFGMIDVRTMSFV.

The protein belongs to the metallo-dependent hydrolases superfamily. Adenine deaminase family. Mn(2+) serves as cofactor.

It catalyses the reaction adenine + H2O + H(+) = hypoxanthine + NH4(+). The sequence is that of Adenine deaminase from Gluconobacter oxydans (strain 621H) (Gluconobacter suboxydans).